We begin with the raw amino-acid sequence, 723 residues long: Transmembrane channel-like protein 7 (723 aa).

A disordered region spans residues 1–21 (MSESSASALQLGRPSRQPAVH). At 1–168 (MSESSASALQ…GIQSYFSFLR (168 aa)) the chain is on the extracellular side. N-linked (GlcNAc...) asparagine glycosylation is present at asparagine 24. Residues 51 to 70 (RRRTTVHSRDKQSGTLLKST) form a disordered region. An N-linked (GlcNAc...) asparagine glycan is attached at asparagine 84. Residue serine 89 is modified to Phosphoserine. A glycan (N-linked (GlcNAc...) asparagine) is linked at asparagine 96. Residues 169 to 189 (FLVLLNLVIFLIIFMLVLLPI) traverse the membrane as a helical segment. The Cytoplasmic portion of the chain corresponds to 190-219 (LLTKYKITNSSFVLIPFKDTDIQCTVYPVS). Residues 220 to 240 (SSGLIYFYSYIIDLLSGTGFL) traverse the membrane as a helical segment. The Extracellular portion of the chain corresponds to 241 to 263 (EETSLFYGHYTIDGVKFQNFTYD). Asparagine 259 is a glycosylation site (N-linked (GlcNAc...) asparagine). Residues 264–284 (LPLAYLISTIAYLALSLLWIV) form a helical membrane-spanning segment. The Cytoplasmic portion of the chain corresponds to 285–362 (KRSVEGFKIN…EETIRIYSLR (78 aa)). Residues 363 to 383 (LFLNCIVLAVLGACFYAIYVA) form a helical membrane-spanning segment. The Extracellular portion of the chain corresponds to 384-404 (TVFSQEHMKKEIDKMVFGENL). A helical membrane pass occupies residues 405–425 (LILYLPSIVITLANFITPMIF). The Cytoplasmic portion of the chain corresponds to 426–494 (AKIIRYEDYS…PCWETQVGQE (69 aa)). The helical transmembrane segment at 495-515 (MYKLMIFDFIIILAVTLFVDF) threads the bilayer. Over 516 to 555 (PRKLLVTYCSSWKLIQCWGQQEFAIPDNVLGIVYGQTICW) the chain is Extracellular. Residues 556 to 576 (IGAFFSPLLPAIATLKFIIIF) traverse the membrane as a helical segment. Residues 577–601 (YVKEWSLLYTCRPSPRPFRASNSNF) are Cytoplasmic-facing. Residues 602 to 622 (FFLLVLLIGLCLAIIPLTISI) form a helical membrane-spanning segment. Residues 623–665 (SRIPSSKACGPFTNFNTTWEVIPKTVSTFPSSLQSFIHGVTSE) lie on the Extracellular side of the membrane. Asparagine 638 is a glycosylation site (N-linked (GlcNAc...) asparagine). The chain crosses the membrane as a helical span at residues 666–686 (AFAVPFFMIICLIMFYFIALA). At 687 to 723 (GAHKRVVIQLREQLSLESRDKRYLIQKLTEAQRDTRN) the chain is on the cytoplasmic side.

This sequence belongs to the TMC family. As to quaternary structure, interacts with PIEZO2; the interaction inhibits PIEZO2-conducted mechanically activated currents.

It localises to the membrane. Acts as an inhibitory modulator of PIEZO2 mechanosensitive channel in dorsal root ganglion (DRG) neurons through physical interactions or interference with the interaction between Piezo2 and the cytoskeleton. The sequence is that of Transmembrane channel-like protein 7 (TMC7) from Macaca fascicularis (Crab-eating macaque).